The chain runs to 353 residues: tRNA-specific 2-thiouridylase MnmA 2 (353 aa).

ATP contacts are provided by residues 9–16 (AMSGGVDS) and Met35. Residue Cys98 is the Nucleophile of the active site. Cys98 and Cys194 are disulfide-bonded. Gly122 provides a ligand contact to ATP. An interaction with tRNA region spans residues 144–146 (KDQ). Cys194 serves as the catalytic Cysteine persulfide intermediate. The tract at residues 300–301 (RY) is interaction with tRNA.

This sequence belongs to the MnmA/TRMU family.

It localises to the cytoplasm. The enzyme catalyses S-sulfanyl-L-cysteinyl-[protein] + uridine(34) in tRNA + AH2 + ATP = 2-thiouridine(34) in tRNA + L-cysteinyl-[protein] + A + AMP + diphosphate + H(+). In terms of biological role, catalyzes the 2-thiolation of uridine at the wobble position (U34) of tRNA, leading to the formation of s(2)U34. This chain is tRNA-specific 2-thiouridylase MnmA 2, found in Clostridium botulinum (strain Loch Maree / Type A3).